Reading from the N-terminus, the 460-residue chain is Exodeoxyribonuclease 7 large subunit (460 aa).

This sequence belongs to the XseA family. In terms of assembly, heterooligomer composed of large and small subunits.

It is found in the cytoplasm. The enzyme catalyses Exonucleolytic cleavage in either 5'- to 3'- or 3'- to 5'-direction to yield nucleoside 5'-phosphates.. Bidirectionally degrades single-stranded DNA into large acid-insoluble oligonucleotides, which are then degraded further into small acid-soluble oligonucleotides. The sequence is that of Exodeoxyribonuclease 7 large subunit from Edwardsiella ictaluri (strain 93-146).